A 411-amino-acid chain; its full sequence is Mitogen-activated protein kinase 8 (411 aa).

The Protein kinase domain maps to 26 to 321 (YQNLKPIGSG…VDEALQHPYI (296 aa)). ATP contacts are provided by residues 32–40 (IGSGAQGIV) and K55. Position 116 is an S-nitrosocysteine; in inhibited form (C116). The active-site Proton acceptor is the D151. T183 bears the Phosphothreonine; by MAP2K7 mark. The TXY signature appears at 183-185 (TPY). Position 185 is a phosphotyrosine; by MAP2K4 (Y185). Residues 368-411 (KNGVIRGQPSPLGAAVINGSQHPVSSPSVNDMSSMSTDPTLASD) are disordered. S377 is modified (phosphoserine). Residues 390–403 (PVSSPSVNDMSSMS) show a composition bias toward low complexity.

It belongs to the protein kinase superfamily. CMGC Ser/Thr protein kinase family. MAP kinase subfamily. Forms a complex with MAPK8IP1 and ARHGEF28. Found in a complex with SH3RF1, RAC1, MAP3K11/MLK3, MAP2K7/MKK7 and MAPK8IP1/JIP1. Found in a complex with SH3RF1, RAC2, MAP3K7/TAK1, MAP2K7/MKK7, MAPK8IP1/JIP1 and MAPK9/JNK2. Binds to at least four scaffolding proteins, MAPK8IP1/JIP-1, MAPK8IP2/JIP-2, MAPK8IP3/JIP-3/JSAP1 and SPAG9/MAPK8IP4/JIP-4. These proteins also bind other components of the JNK signaling pathway. Interacts with TP53, WWOX. Interacts with JAMP. Interacts with NFATC4. Interacts (phosphorylated form) with NFE2; the interaction phosphorylates NFE2 in undifferentiated cells. Interacts with MECOM; regulates JNK signaling. Interacts with PIN1; this interaction mediates MAPK8 conformational changes leading to the binding of MAPK8 to its substrates. Interacts with HSF1 (via D domain and preferentially with hyperphosphorylated form); this interaction occurs under both normal growth conditions and immediately upon heat shock. Interacts with STMN2, STMN3 and STMN4. Interacts with GRIPAP1. Interacts with POU5F1; phosphorylates POU5F1 at 'Ser-347'. Interacts with HSF4. Mg(2+) is required as a cofactor. Dually phosphorylated on Thr-183 and Tyr-185 by MAP2K7 and MAP2K4, which activates the enzyme. Phosphorylated by TAOK2. Phosphorylated form is more concentrated at synapses than none-phosphorylated. Post-translationally, nitrosylated upon IFN-gamma-induced endogenous NO production, which inhibits the enzyme. May be phosphorylated at Thr-183 and Tyr-185 by MAP3K1/MEKK1.

The protein localises to the cytoplasm. It localises to the nucleus. Its subcellular location is the synapse. The enzyme catalyses L-seryl-[protein] + ATP = O-phospho-L-seryl-[protein] + ADP + H(+). The catalysed reaction is L-threonyl-[protein] + ATP = O-phospho-L-threonyl-[protein] + ADP + H(+). With respect to regulation, activated by threonine and tyrosine phosphorylation by either of two dual specificity kinases, MAP2K4 and MAP2K7. MAP2K4 shows a strong preference for Tyr-185 while MAP2K7 phosphorylates Tyr-183 preferentially. Inhibited by dual specificity phosphatases, such as DUSP1. Inhibited by SERPINB3. Inhibited by IFN-gamma-induced S-nitrosylation. In terms of biological role, serine/threonine-protein kinase involved in various processes such as cell proliferation, differentiation, migration, transformation and programmed cell death. Extracellular stimuli such as pro-inflammatory cytokines or physical stress stimulate the stress-activated protein kinase/c-Jun N-terminal kinase (SAP/JNK) signaling pathway. In this cascade, two dual specificity kinases MAP2K4/MKK4 and MAP2K7/MKK7 phosphorylate and activate MAPK8/JNK1. In turn, MAPK8/JNK1 phosphorylates a number of transcription factors, primarily components of AP-1 such as JUN, JDP2 and ATF2 and thus regulates AP-1 transcriptional activity. Phosphorylates the replication licensing factor CDT1, inhibiting the interaction between CDT1 and the histone H4 acetylase HBO1 to replication origins. Loss of this interaction abrogates the acetylation required for replication initiation. Promotes stressed cell apoptosis by phosphorylating key regulatory factors including p53/TP53 and Yes-associates protein YAP1. In T-cells, MAPK8 and MAPK9 are required for polarized differentiation of T-helper cells into Th1 cells. Contributes to the survival of erythroid cells by phosphorylating the antagonist of cell death BAD upon EPO stimulation. Mediates starvation-induced BCL2 phosphorylation, BCL2 dissociation from BECN1, and thus activation of autophagy. Phosphorylates STMN2 and hence regulates microtubule dynamics, controlling neurite elongation in cortical neurons. In the developing brain, through its cytoplasmic activity on STMN2, negatively regulates the rate of exit from multipolar stage and of radial migration from the ventricular zone. Phosphorylates several other substrates including heat shock factor protein 4 (HSF4), the deacetylase SIRT1, ELK1, or the E3 ligase ITCH. Phosphorylates the CLOCK-BMAL1 heterodimer and plays a role in the regulation of the circadian clock. Phosphorylates the heat shock transcription factor HSF1, suppressing HSF1-induced transcriptional activity. Phosphorylates POU5F1, which results in the inhibition of POU5F1's transcriptional activity and enhances its proteasomal degradation. Phosphorylates JUND and this phosphorylation is inhibited in the presence of MEN1. In neurons, phosphorylates SYT4 which captures neuronal dense core vesicles at synapses. Phosphorylates EIF4ENIF1/4-ET in response to oxidative stress, promoting P-body assembly. Phosphorylates SIRT6 in response to oxidative stress, stimulating its mono-ADP-ribosyltransferase activity. Phosphorylates NLRP3, promoting assembly of the NLRP3 inflammasome. Phosphorylates ALKBH5 in response to reactive oxygen species (ROS), promoting ALKBH5 sumoylation and inactivation. This is Mitogen-activated protein kinase 8 (Mapk8) from Rattus norvegicus (Rat).